Here is a 354-residue protein sequence, read N- to C-terminus: MSLRKIIHVDCDCFYAAIEMRDDPRLAGRPMAVGGSPDHRGVIATCNYEARAYGVRSAMSSRHALKLCPDLLIVKPRFEAYREASREIHGIFRDYTELIEPLSLDEAYLDVSDSQWYSGSATRIAEDIRRRVARTLHITVSAGVAPNKFLAKIASDWRKPNGLFVITPAEVEAFVAALPVARLHGVGKVTADKLTRLGIETCLELREWSRLALVREFGSFGERLWGLARGIDERAVHNDSRRQSVSVENTYDTDLPDLASCLARLPELLDSLNERIARMDNSYRPDKPFVKVKFHDFSQTTMEQAGAGRDLESYRQLLGQAFARGSKPVRLLGVGVRLRDLRGAHEQLELFPPK.

A UmuC domain is found at 6-187 (IIHVDCDCFY…LPVARLHGVG (182 aa)). The Mg(2+) site is built by aspartate 10 and aspartate 105. Glutamate 106 is an active-site residue.

It belongs to the DNA polymerase type-Y family. Monomer. Mg(2+) serves as cofactor.

The protein resides in the cytoplasm. The catalysed reaction is DNA(n) + a 2'-deoxyribonucleoside 5'-triphosphate = DNA(n+1) + diphosphate. Its function is as follows. Poorly processive, error-prone DNA polymerase involved in untargeted mutagenesis. Copies undamaged DNA at stalled replication forks, which arise in vivo from mismatched or misaligned primer ends. These misaligned primers can be extended by PolIV. Exhibits no 3'-5' exonuclease (proofreading) activity. May be involved in translesional synthesis, in conjunction with the beta clamp from PolIII. This chain is DNA polymerase IV, found in Pseudomonas putida (strain GB-1).